Here is a 489-residue protein sequence, read N- to C-terminus: Cytochrome P450 monooxygenase ataF (489 aa).

The chain crosses the membrane as a helical span at residues 12–32 (WLEHSAVIATLFAFGTALFLV). N-linked (GlcNAc...) asparagine glycosylation occurs at asparagine 289. Cysteine 434 is a binding site for heme.

It belongs to the cytochrome P450 family. Heme is required as a cofactor.

It is found in the membrane. The protein operates within mycotoxin biosynthesis. Cytochrome P450 monooxygenase; part of the gene cluster that mediates the biosynthesis of acetylaranotin, a member of the epipolythiodioxopiperazine (ETP) class of toxins characterized by a disulfide-bridged cyclic dipeptide. The first step of acetylaranotin biosynthesis is performed by the NRPS ataP which produces diketopiperazine cyclo-L-Phe-L-Phe via the condensation of 2 phenylalanines (L-Phe). The ataC domain of ataTC then catalyzes the formation of bishydroxylation of cyclo-L-Phe-L-Phe. The glutathione S-transferase domain ataG in ataIMG further catalyzes the conjugation of two glutathiones to the bishydroxylated intermediate. Next, the dipeptidase ataJ removes the Glu residues. The following step is performed by the carbon sulfur lyase domain ataI of ataIMG which may convert the bis-cysteinyl adduct to yield an epidithiol intermediate. The ataT domain from ataTC then catalyzes the oxidation of the free dithiols, followed by a cyclization step catalyzed by the cytochrome P450 ataF. AtaF probably acts as an epoxidase to promote a dual epoxidation formation at C8 and C9 along with C8' and C9', followed by the spontaneous nucleophilic attack of the amide nitrogens N10 and N10' to yield an intermediate with the pyrrolidine partial structure. The final steps of acetylaranotin biosynthesis involve the acetylation and ring rearrangement of an epitetrathiodiketopiperazine intermediate to produce acetylaranotin. AtaH probably catalyzes the acetylation of epitetrathiodiketopiperazine to produce a diacetate and ataY is responsible for the formation of the dihydrooxepin moiety that converts the diacetate intermediate to acetylaranotin via acetylapoaranotin. Both enzymes could function independently in the absence of the other. The acetylaranotin bis-thiomethyltransferase ataS located outside of acetylaranotin gene cluster is the main thiomethyltransferase responsible for converting acetylaranotin and its related intermediates to their methylated forms. This Aspergillus terreus (strain NIH 2624 / FGSC A1156) protein is Cytochrome P450 monooxygenase ataF.